The following is a 595-amino-acid chain: Cyclin-dependent kinase-like 3 (595 aa).

Residues 4–286 (YETLGKVGEG…STDLLRHDYF (283 aa)) enclose the Protein kinase domain. Residues 10 to 18 (VGEGSYGTV) and Lys-33 contribute to the ATP site. The short motif at 45–51 (KIATREI) is the [NKR]KIAxRE element. Asp-125 serves as the catalytic Proton acceptor. A Phosphothreonine modification is found at Thr-158. Tyr-160 is subject to Phosphotyrosine. 3 disordered regions span residues 362 to 427 (VIKA…PHAG), 448 to 513 (SSNL…NKRK), and 551 to 586 (RESK…GKNL). Residues 368–386 (GKGDVPDQKKPEYEGDHRQ) are compositionally biased toward basic and acidic residues. The span at 387–397 (QGTADDTQPSS) shows a compositional bias: polar residues. The segment covering 448–457 (SSNLSHPNSR) has biased composition (low complexity). Composition is skewed to polar residues over residues 468 to 491 (SSQT…QVQT) and 499 to 509 (RTGQNDQISSG). Residues 570-585 (NQEKQEGGDGDCEGKN) are compositionally biased toward basic and acidic residues.

The protein belongs to the protein kinase superfamily. CMGC Ser/Thr protein kinase family. CDC2/CDKX subfamily.

The protein localises to the cytoplasm. It catalyses the reaction L-seryl-[protein] + ATP = O-phospho-L-seryl-[protein] + ADP + H(+). The catalysed reaction is L-threonyl-[protein] + ATP = O-phospho-L-threonyl-[protein] + ADP + H(+). The polypeptide is Cyclin-dependent kinase-like 3 (Mus musculus (Mouse)).